We begin with the raw amino-acid sequence, 99 residues long: Integration host factor subunit alpha (99 aa).

Belongs to the bacterial histone-like protein family. In terms of assembly, heterodimer of an alpha and a beta chain.

In terms of biological role, this protein is one of the two subunits of integration host factor, a specific DNA-binding protein that functions in genetic recombination as well as in transcriptional and translational control. The sequence is that of Integration host factor subunit alpha from Enterobacter sp. (strain 638).